The primary structure comprises 179 residues: Large ribosomal subunit protein uL5 (179 aa).

The protein belongs to the universal ribosomal protein uL5 family. As to quaternary structure, part of the 50S ribosomal subunit; part of the 5S rRNA/L5/L18/L25 subcomplex. Contacts the 5S rRNA and the P site tRNA. Forms a bridge to the 30S subunit in the 70S ribosome.

Its function is as follows. This is one of the proteins that bind and probably mediate the attachment of the 5S RNA into the large ribosomal subunit, where it forms part of the central protuberance. In the 70S ribosome it contacts protein S13 of the 30S subunit (bridge B1b), connecting the 2 subunits; this bridge is implicated in subunit movement. Contacts the P site tRNA; the 5S rRNA and some of its associated proteins might help stabilize positioning of ribosome-bound tRNAs. The protein is Large ribosomal subunit protein uL5 of Nitrosospira multiformis (strain ATCC 25196 / NCIMB 11849 / C 71).